We begin with the raw amino-acid sequence, 459 residues long: Cobyrinate a,c-diamide synthase (459 aa).

One can recognise a GATase cobBQ-type domain in the interval 252-446 (TLALADDEAF…LHVHFAQRPE (195 aa)). Cys334 serves as the catalytic Nucleophile.

This sequence belongs to the CobB/CbiA family. In terms of assembly, monomer. Mg(2+) serves as cofactor.

It carries out the reaction cob(II)yrinate + 2 L-glutamine + 2 ATP + 2 H2O = cob(II)yrinate a,c diamide + 2 L-glutamate + 2 ADP + 2 phosphate + 2 H(+). It participates in cofactor biosynthesis; adenosylcobalamin biosynthesis; cob(II)yrinate a,c-diamide from sirohydrochlorin (anaerobic route): step 10/10. Its function is as follows. Catalyzes the ATP-dependent amidation of the two carboxylate groups at positions a and c of cobyrinate, using either L-glutamine or ammonia as the nitrogen source. Is able to use other nucleotide triphosphates as substrate, such as GTP or UTP, although less efficiently than ATP. The protein is Cobyrinate a,c-diamide synthase of Salmonella typhimurium (strain LT2 / SGSC1412 / ATCC 700720).